A 435-amino-acid chain; its full sequence is Methylenetetrahydrofolate--tRNA-(uracil-5-)-methyltransferase TrmFO (435 aa).

An FAD-binding site is contributed by Gly10–Gly15.

The protein belongs to the MnmG family. TrmFO subfamily. FAD is required as a cofactor.

It is found in the cytoplasm. The enzyme catalyses uridine(54) in tRNA + (6R)-5,10-methylene-5,6,7,8-tetrahydrofolate + NADH + H(+) = 5-methyluridine(54) in tRNA + (6S)-5,6,7,8-tetrahydrofolate + NAD(+). It carries out the reaction uridine(54) in tRNA + (6R)-5,10-methylene-5,6,7,8-tetrahydrofolate + NADPH + H(+) = 5-methyluridine(54) in tRNA + (6S)-5,6,7,8-tetrahydrofolate + NADP(+). Catalyzes the folate-dependent formation of 5-methyl-uridine at position 54 (M-5-U54) in all tRNAs. The sequence is that of Methylenetetrahydrofolate--tRNA-(uracil-5-)-methyltransferase TrmFO from Geotalea uraniireducens (strain Rf4) (Geobacter uraniireducens).